The chain runs to 479 residues: Glutamate--tRNA ligase 2 (479 aa).

The 'HIGH' region motif lies at Pro10–Gly20. The 'KMSKS' region signature appears at Lys243–Arg247. Lys246 contributes to the ATP binding site.

This sequence belongs to the class-I aminoacyl-tRNA synthetase family. Glutamate--tRNA ligase type 1 subfamily. In terms of assembly, monomer.

It is found in the cytoplasm. It carries out the reaction tRNA(Glu) + L-glutamate + ATP = L-glutamyl-tRNA(Glu) + AMP + diphosphate. Catalyzes the attachment of glutamate to tRNA(Glu) in a two-step reaction: glutamate is first activated by ATP to form Glu-AMP and then transferred to the acceptor end of tRNA(Glu). In Thermoanaerobacter pseudethanolicus (strain ATCC 33223 / 39E) (Clostridium thermohydrosulfuricum), this protein is Glutamate--tRNA ligase 2.